The chain runs to 742 residues: MEGVMENVGGLMQNIRRRHMSITEMTEESVRLGVAQMDTGFKKIKEMSIMVLETGLRLPGLLFIELLWRYQGFSFEDISDDMMKQTPLSYFDIPTMLDFVHRRNFDHHAAIILSYFVIFISLMFLTLPLSRLIRMYSHFLSVFLFGVAYKLSAIYVDLEMKTGEEELKLDGLIKLERHGFHFLAQMLLVVLQSMLLEVDGEPWRVALPVFALPIVARMCGCPMDKLKNAHNYACTGTMIFIATYMLYRAPSLIKSTKTALRQIKAVFMVHGLADGVAVLWRKLRILELLTFTWITMFLMVLYVELIDKGRTWSEVGRILLTGVAETTNTPITLAALAVSVSYVCKWIADLTKLITGGTRSHGHVLAHSGYTEAVSVVILCIQTGFLGMQVEQKTILLALVLYIVISALLQSLFEIIEVVLLNLPSSPTASRARHARCICIALLLVVIPFFTTKTMLALLPIDIYTAIIIANSATVTARAIGVILKYIVLIVETKSEEPWEGIDDLTYYIDCANKGIELLAAKVVMVFGCMQVVKVGFSFATFAILLFHVIVNIYKRLEHTVSFIKNRNAAVKNINRLSKADVVQLREREDVCAICFIEMKEEARITPCKHYFHGPCLRKWLAVKMVCPLCYTYMKEDDFDSKSSSSGTLNEVQQNEEGAAVEENPENPEEQPEAPNAERAPGDMFDWDDLFGFRAERETRNRNEQRIHGARDMWPLLVDNDAYESDSDAGSEELVIEEENNN.

Transmembrane regions (helical) follow at residues Ala109–Leu129, His138–Leu158, His178–Val198, Ala233–Ile253, Ile285–Leu305, Ile318–Val338, Ser368–Met388, Ile395–Ile415, Ile438–Leu458, Ile463–Ile483, and Val533–Ile553. The RING-type; atypical zinc finger occupies Cys592 to Cys630. Disordered stretches follow at residues Lys642–Met684 and Ala722–Asn742. Residues Ala659–Pro672 show a composition bias toward acidic residues.

It is found in the membrane. It localises to the golgi apparatus. The protein localises to the cis-Golgi network. The protein resides in the trans-Golgi network. The catalysed reaction is S-ubiquitinyl-[E2 ubiquitin-conjugating enzyme]-L-cysteine + [acceptor protein]-L-lysine = [E2 ubiquitin-conjugating enzyme]-L-cysteine + N(6)-ubiquitinyl-[acceptor protein]-L-lysine.. E3 ubiquitin ligase that catalyzes the direct transfer of ubiquitin from E2 ubiquitin-conjugating enzyme to a specific substrate. Acting downstream of probable Golgi transport protein eas-1, involved in inhibition of activation of transcription factor sbp-1, thereby playing a role in regulating AMsh glial cell size. The polypeptide is RING finger protein 145 homolog (Caenorhabditis elegans).